The primary structure comprises 32 residues: Kappa-conotoxin SrXIA (32 aa).

4 disulfide bridges follow: C1–C15, C8–C20, C14–C24, and C19–C28. A 4-carboxyglutamate mark is found at E9 and E10. At P32 the chain carries Proline amide.

This sequence belongs to the conotoxin I2 superfamily. In terms of tissue distribution, expressed by the venom duct.

Its subcellular location is the secreted. Functionally, kappa-conotoxins bind and inhibit voltage-gated potassium channels. This toxin inhibits Kv1.2/KCNA2 and Kv1.6/KCNA6. Produces stiffening of body, limbs and tail when injected intracranially into mice. This Conus spurius (Alphabet cone) protein is Kappa-conotoxin SrXIA.